Reading from the N-terminus, the 70-residue chain is ATP synthase subunit c (70 aa).

The next 2 membrane-spanning stretches (helical) occupy residues 4–24 (IATA…NGLI) and 47–67 (FIGI…GFLL).

This sequence belongs to the ATPase C chain family. In terms of assembly, F-type ATPases have 2 components, F(1) - the catalytic core - and F(0) - the membrane proton channel. F(1) has five subunits: alpha(3), beta(3), gamma(1), delta(1), epsilon(1). F(0) has three main subunits: a(1), b(2) and c(10-14). The alpha and beta chains form an alternating ring which encloses part of the gamma chain. F(1) is attached to F(0) by a central stalk formed by the gamma and epsilon chains, while a peripheral stalk is formed by the delta and b chains.

It is found in the cell membrane. F(1)F(0) ATP synthase produces ATP from ADP in the presence of a proton or sodium gradient. F-type ATPases consist of two structural domains, F(1) containing the extramembraneous catalytic core and F(0) containing the membrane proton channel, linked together by a central stalk and a peripheral stalk. During catalysis, ATP synthesis in the catalytic domain of F(1) is coupled via a rotary mechanism of the central stalk subunits to proton translocation. Its function is as follows. Key component of the F(0) channel; it plays a direct role in translocation across the membrane. A homomeric c-ring of between 10-14 subunits forms the central stalk rotor element with the F(1) delta and epsilon subunits. In Exiguobacterium sibiricum (strain DSM 17290 / CCUG 55495 / CIP 109462 / JCM 13490 / 255-15), this protein is ATP synthase subunit c.